A 244-amino-acid chain; its full sequence is Small ribosomal subunit protein uS2 (244 aa).

The protein belongs to the universal ribosomal protein uS2 family.

The chain is Small ribosomal subunit protein uS2 from Endomicrobium trichonymphae.